The sequence spans 557 residues: Venom carboxylesterase-6 (557 aa).

The N-terminal stretch at 1 to 21 (MYMLKLSYILLFLGFVKFSWQ) is a signal peptide. A disulfide bridge links Cys88 with Cys108. The N-linked (GlcNAc...) asparagine glycan is linked to Asn145. Ser212 acts as the Acyl-ester intermediate in catalysis. Cys264 and Cys275 form a disulfide bridge. Glu341 acts as the Charge relay system in catalysis. The N-linked (GlcNAc...) asparagine glycan is linked to Asn374. His464 serves as the catalytic Charge relay system. Asn478, Asn528, and Asn542 each carry an N-linked (GlcNAc...) asparagine glycan.

Belongs to the type-B carboxylesterase/lipase family. As to expression, expressed by the venom gland.

It localises to the secreted. The enzyme catalyses a carboxylic ester + H2O = an alcohol + a carboxylate + H(+). This is Venom carboxylesterase-6 from Apis mellifera (Honeybee).